The following is a 205-amino-acid chain: Large ribosomal subunit protein uL3 (205 aa).

The protein belongs to the universal ribosomal protein uL3 family. Part of the 50S ribosomal subunit. Forms a cluster with proteins L14 and L19.

One of the primary rRNA binding proteins, it binds directly near the 3'-end of the 23S rRNA, where it nucleates assembly of the 50S subunit. The polypeptide is Large ribosomal subunit protein uL3 (Parabacteroides distasonis (strain ATCC 8503 / DSM 20701 / CIP 104284 / JCM 5825 / NCTC 11152)).